A 441-amino-acid polypeptide reads, in one-letter code: uncharacterized protein (441 aa).

A signal peptide spans 1–23; sequence MSRKYLLSLLLVGALVISVVASG. At Cys-24 the chain carries N-acetylcysteine. A lipid anchor (S-archaeol cysteine) is attached at Cys-24.

The protein belongs to the bacterial solute-binding protein 1 family.

It is found in the cell membrane. Functionally, probably part of a binding-protein-dependent transport system PH1214/15/16. This is an uncharacterized protein from Pyrococcus horikoshii (strain ATCC 700860 / DSM 12428 / JCM 9974 / NBRC 100139 / OT-3).